A 263-amino-acid chain; its full sequence is Nicotinamide riboside transporter PnuC (263 aa).

Residues 1 to 40 are Cytoplasmic-facing; that stretch reads MQYGMDSFGLRGIPHQVFIKKKEGKIMSLAWWKRELFGGW. A helical transmembrane segment spans residues 41 to 61; the sequence is THFEAVWLLMFLGIQAVVFVF. N62 is a topological domain (periplasmic). Residues 63–83 traverse the membrane as a helical segment; sequence PDSWLASVAAVTGILCVVFVG. Residues 84 to 86 lie on the Cytoplasmic side of the membrane; it reads KGK. The helical transmembrane segment at 87 to 107 threads the bilayer; sequence ISNYLFGLISVSLYAYVSYTF. The Periplasmic portion of the chain corresponds to 108-109; sequence KL. Residues 110–131 form a helical membrane-spanning segment; that stretch reads YGEMMLNLLVYVPVQFVGFAMW. Q124 lines the beta-nicotinamide D-riboside pocket. Residues 132-155 are Cytoplasmic-facing; it reads RKHMALGETAETEEVKAKALTVRQ. Residues 156–177 traverse the membrane as a helical segment; it reads WLLVVAASVVGTSVYIEWLHHL. At 178 to 180 the chain is on the periplasmic side; that stretch reads GSA. The chain crosses the membrane as a helical span at residues 181–201; it reads LPTLDGVTVVVSIVAQVLMIL. Q196 provides a ligand contact to beta-nicotinamide D-riboside. Residues 202–205 lie on the Cytoplasmic side of the membrane; it reads RYRE. Residues 206–226 traverse the membrane as a helical segment; the sequence is QWALWIVVNILTISLWAVAWF. Beta-nicotinamide D-riboside contacts are provided by W210 and N214. Residues 227-232 lie on the Periplasmic side of the membrane; the sequence is KNGETS. Residues 233-253 form a helical membrane-spanning segment; that stretch reads LPLLLMYVMYLCNSVYGYINW. Y242 contacts beta-nicotinamide D-riboside. Over 254-263 the chain is Cytoplasmic; the sequence is TKLVKRHSGQ.

The protein belongs to the nicotinamide ribonucleoside (NR) uptake permease (TC 4.B.1) family. As to quaternary structure, homotrimer.

It is found in the cell inner membrane. Its function is as follows. Required for nicotinamide riboside transport across the inner membrane. This Neisseria mucosa (strain ATCC 25996 / DSM 4631 / NCTC 10774 / M26) protein is Nicotinamide riboside transporter PnuC.